A 745-amino-acid chain; its full sequence is Probable xanthine dehydrogenase subunit D (745 aa).

The Mo-molybdopterin site is built by Q204, F235, and A508.

The protein belongs to the xanthine dehydrogenase family. Could be composed of four subunits: PucA, PucC, PucD and PucE. Mo-molybdopterin serves as cofactor.

The enzyme catalyses xanthine + NAD(+) + H2O = urate + NADH + H(+). The catalysed reaction is hypoxanthine + NAD(+) + H2O = xanthine + NADH + H(+). It participates in purine metabolism; hypoxanthine degradation; urate from hypoxanthine: step 1/2. The protein operates within purine metabolism; hypoxanthine degradation; urate from hypoxanthine: step 2/2. Functionally, oxidizes hypoxanthine and xanthine to uric acid. This chain is Probable xanthine dehydrogenase subunit D (pucD), found in Bacillus subtilis (strain 168).